A 394-amino-acid chain; its full sequence is Putative 8-amino-7-oxononanoate synthase (394 aa).

Arg-30 provides a ligand contact to substrate. Pyridoxal 5'-phosphate is bound at residue 117 to 118; it reads GY. Residue His-142 coordinates substrate. Residues Ser-190, 215–218, and 246–249 contribute to the pyridoxal 5'-phosphate site; these read DEAH and TLSK. Lys-249 is modified (N6-(pyridoxal phosphate)lysine). Thr-364 provides a ligand contact to substrate.

This sequence belongs to the class-II pyridoxal-phosphate-dependent aminotransferase family. BioF subfamily. As to quaternary structure, homodimer. Pyridoxal 5'-phosphate is required as a cofactor.

The enzyme catalyses 6-carboxyhexanoyl-[ACP] + L-alanine + H(+) = (8S)-8-amino-7-oxononanoate + holo-[ACP] + CO2. It participates in cofactor biosynthesis; biotin biosynthesis. Catalyzes the decarboxylative condensation of pimeloyl-[acyl-carrier protein] and L-alanine to produce 8-amino-7-oxononanoate (AON), [acyl-carrier protein], and carbon dioxide. The chain is Putative 8-amino-7-oxononanoate synthase (bioF) from Nostoc punctiforme (strain ATCC 29133 / PCC 73102).